The following is a 184-amino-acid chain: Tumor necrosis factor alpha-induced protein 8-like protein 2 (184 aa).

It belongs to the TNFAIP8 family. TNFAIP8L2 subfamily. As to quaternary structure, may interact with CASP8; however, such result is unclear since could not reproduce the interaction with CASP8. Interacts with RAC1. Post-translationally, ubiquitinated in a BTRC-depdent manner; leading to degradation mediated through the proteasome pathway.

Its subcellular location is the cytoplasm. The protein resides in the nucleus. It localises to the lysosome. Its function is as follows. Acts as a negative regulator of innate and adaptive immunity by maintaining immune homeostasis. Plays a regulatory role in the Toll-like signaling pathway by determining the strength of LPS-induced signaling and gene expression. Inhibits TCR-mediated T-cell activation and negatively regulate T-cell function to prevent hyperresponsiveness. Also inhibits autolysosome formation via negatively modulating MTOR activation by interacting with RAC1 and promoting the disassociation of the RAC1-MTOR complex. Plays an essential role in NK-cell biology by acting as a checkpoint and displaying an expression pattern correlating with NK-cell maturation process and by negatively regulating NK-cell maturation and antitumor immunity. Mechanistically, suppresses IL-15-triggered mTOR activity in NK-cells. The polypeptide is Tumor necrosis factor alpha-induced protein 8-like protein 2 (TNFAIP8L2) (Rhinolophus ferrumequinum (Greater horseshoe bat)).